Reading from the N-terminus, the 1226-residue chain is Methionine synthase (1226 aa).

A Hcy-binding domain is found at 6–326 (RQQIEAQLKQ…EHIRQMAQAV (321 aa)). Zn(2+) contacts are provided by cysteine 248, cysteine 311, and cysteine 312. Residues 357-618 (FINVGERTNV…VPEKLREAVE (262 aa)) form the Pterin-binding domain. The 95-residue stretch at 651 to 745 (SALEWRTWPV…FINAEKQSGS (95 aa)) folds into the B12-binding N-terminal domain. Residues glutamate 695, 757–761 (GDVHD), histidine 760, serine 805, threonine 809, and alanine 861 contribute to the methylcob(III)alamin site. Residues 747–882 (NGKILLATVK…SDERRPAFIE (136 aa)) enclose the B12-binding domain. In terms of domain architecture, AdoMet activation spans 898–1226 (KKPRTKPVTL…EKWLGPNING (329 aa)). S-adenosyl-L-methionine-binding positions include aspartate 948, arginine 1136, and 1191–1192 (YF).

The protein belongs to the vitamin-B12 dependent methionine synthase family. Methylcob(III)alamin is required as a cofactor. The cofactor is Zn(2+).

The catalysed reaction is (6S)-5-methyl-5,6,7,8-tetrahydrofolate + L-homocysteine = (6S)-5,6,7,8-tetrahydrofolate + L-methionine. The protein operates within amino-acid biosynthesis; L-methionine biosynthesis via de novo pathway; L-methionine from L-homocysteine (MetH route): step 1/1. Catalyzes the transfer of a methyl group from methyl-cobalamin to homocysteine, yielding enzyme-bound cob(I)alamin and methionine. Subsequently, remethylates the cofactor using methyltetrahydrofolate. The polypeptide is Methionine synthase (metH) (Vibrio parahaemolyticus serotype O3:K6 (strain RIMD 2210633)).